The chain runs to 87 residues: Phosphoribosyl-ATP pyrophosphatase (87 aa).

Belongs to the PRA-PH family.

The protein localises to the cytoplasm. The enzyme catalyses 1-(5-phospho-beta-D-ribosyl)-ATP + H2O = 1-(5-phospho-beta-D-ribosyl)-5'-AMP + diphosphate + H(+). Its pathway is amino-acid biosynthesis; L-histidine biosynthesis; L-histidine from 5-phospho-alpha-D-ribose 1-diphosphate: step 2/9. This is Phosphoribosyl-ATP pyrophosphatase from Kocuria rhizophila (strain ATCC 9341 / DSM 348 / NBRC 103217 / DC2201).